Here is a 304-residue protein sequence, read N- to C-terminus: Aspartate carbamoyltransferase catalytic subunit (304 aa).

Residues Arg49 and Thr50 each contribute to the carbamoyl phosphate site. Lys77 serves as a coordination point for L-aspartate. Arg99, His127, and Gln130 together coordinate carbamoyl phosphate. L-aspartate-binding residues include Arg160 and Arg211. Residues Ala250 and Pro251 each coordinate carbamoyl phosphate. Ser303 carries the post-translational modification Phosphoserine.

This sequence belongs to the aspartate/ornithine carbamoyltransferase superfamily. ATCase family. Heterododecamer (2C3:3R2) of six catalytic PyrB chains organized as two trimers (C3), and six regulatory PyrI chains organized as three dimers (R2).

The catalysed reaction is carbamoyl phosphate + L-aspartate = N-carbamoyl-L-aspartate + phosphate + H(+). The protein operates within pyrimidine metabolism; UMP biosynthesis via de novo pathway; (S)-dihydroorotate from bicarbonate: step 2/3. In terms of biological role, catalyzes the condensation of carbamoyl phosphate and aspartate to form carbamoyl aspartate and inorganic phosphate, the committed step in the de novo pyrimidine nucleotide biosynthesis pathway. The protein is Aspartate carbamoyltransferase catalytic subunit of Bacillus subtilis (strain 168).